We begin with the raw amino-acid sequence, 566 residues long: uncharacterized protein (566 aa).

This sequence belongs to the protein kinase superfamily. ADCK protein kinase family.

This is an uncharacterized protein from Synechocystis sp. (strain ATCC 27184 / PCC 6803 / Kazusa).